The following is a 307-amino-acid chain: tRNA pseudouridine synthase B (307 aa).

Residue Asp41 is the Nucleophile of the active site.

This sequence belongs to the pseudouridine synthase TruB family. Type 1 subfamily.

It carries out the reaction uridine(55) in tRNA = pseudouridine(55) in tRNA. In terms of biological role, responsible for synthesis of pseudouridine from uracil-55 in the psi GC loop of transfer RNAs. The sequence is that of tRNA pseudouridine synthase B from Prochlorococcus marinus (strain MIT 9312).